An 81-amino-acid polypeptide reads, in one-letter code: MQKGIHPDYHLVVFQDSTTGFKFISGSTATSAETVEWEDGNTYPLIRVEITSDSHPFYTGKQKFTKADGAVDRFNKKYGLK.

It belongs to the bacterial ribosomal protein bL31 family. Type B subfamily. In terms of assembly, part of the 50S ribosomal subunit.

This Lactiplantibacillus plantarum (strain ATCC BAA-793 / NCIMB 8826 / WCFS1) (Lactobacillus plantarum) protein is Large ribosomal subunit protein bL31B (rpmE2).